Consider the following 506-residue polypeptide: Maturase K (506 aa).

Belongs to the intron maturase 2 family. MatK subfamily.

It localises to the plastid. Its subcellular location is the chloroplast. Functionally, usually encoded in the trnK tRNA gene intron. Probably assists in splicing its own and other chloroplast group II introns. This is Maturase K from Trifolium incarnatum (Crimson clover).